Reading from the N-terminus, the 255-residue chain is MNILVTNDDGVTADGILCLARTLSKKYKVTVVAPETEQSAVGHAITLRLPLWLRKLDINENFEIYSVSGTPADCVKMGIDVVLGEKPDLLISGINRGNNLGTDVVYSGTVSGALEGAIAGVPSIAVSSYSFENPMYETAAKFILDFLEEFDVRSIPRFTALNINVPSVPYDQIKGWKLTRQSKRMYDDYFEKRVDPSGGNYYWMMGTIIEDDPDPKADYKAIAENYVSVTPISVFLTNEEYLKRLEERYEDKTIR.

The a divalent metal cation site is built by Asp-8, Asp-9, Ser-39, and Asn-95.

It belongs to the SurE nucleotidase family. The cofactor is a divalent metal cation.

It is found in the cytoplasm. The catalysed reaction is a ribonucleoside 5'-phosphate + H2O = a ribonucleoside + phosphate. In terms of biological role, nucleotidase that shows phosphatase activity on nucleoside 5'-monophosphates. The chain is 5'-nucleotidase SurE from Thermosipho africanus (strain TCF52B).